The primary structure comprises 156 residues: ATP synthase subunit b (156 aa).

A helical transmembrane segment spans residues 12 to 32; the sequence is VAFLIFVLFCMKYVWPPVITA.

The protein belongs to the ATPase B chain family. As to quaternary structure, F-type ATPases have 2 components, F(1) - the catalytic core - and F(0) - the membrane proton channel. F(1) has five subunits: alpha(3), beta(3), gamma(1), delta(1), epsilon(1). F(0) has three main subunits: a(1), b(2) and c(10-14). The alpha and beta chains form an alternating ring which encloses part of the gamma chain. F(1) is attached to F(0) by a central stalk formed by the gamma and epsilon chains, while a peripheral stalk is formed by the delta and b chains.

Its subcellular location is the cell inner membrane. Its function is as follows. F(1)F(0) ATP synthase produces ATP from ADP in the presence of a proton or sodium gradient. F-type ATPases consist of two structural domains, F(1) containing the extramembraneous catalytic core and F(0) containing the membrane proton channel, linked together by a central stalk and a peripheral stalk. During catalysis, ATP synthesis in the catalytic domain of F(1) is coupled via a rotary mechanism of the central stalk subunits to proton translocation. Functionally, component of the F(0) channel, it forms part of the peripheral stalk, linking F(1) to F(0). The protein is ATP synthase subunit b of Pseudomonas putida (strain ATCC 700007 / DSM 6899 / JCM 31910 / BCRC 17059 / LMG 24140 / F1).